A 272-amino-acid chain; its full sequence is Putative bark agglutinin LECRPA3 (272 aa).

An N-terminal signal peptide occupies residues 1–29 (PFNPETVYALLAMLISFFVLLASARKENS). N-linked (GlcNAc...) asparagine glycosylation is found at N36, N39, and N65. Mn(2+) contacts are provided by E150 and D152. The Ca(2+) site is built by D152, Y154, N156, and D159. Residues D159 and H164 each contribute to the Mn(2+) site.

This sequence belongs to the leguminous lectin family. As to quaternary structure, homotetramer. As to expression, weak expression in bark. The lectin accumulates in the inner bark in autumn.

Its function is as follows. Bark lectins are storage proteins that probably maintain stocks of nitrogen during dormant period. Self-aggregatable molecules that can bind their own carbohydrate side chains. They could also play a role in the plant's defense against phytophagous invertebrates or herbivorous higher animals. The sequence is that of Putative bark agglutinin LECRPA3 from Robinia pseudoacacia (Black locust).